Consider the following 78-residue polypeptide: Acyl carrier protein (78 aa).

The Carrier domain maps to 2–77; it reads SDIASRVKAI…QAISYIEEAK (76 aa). Ser-37 is subject to O-(pantetheine 4'-phosphoryl)serine.

Belongs to the acyl carrier protein (ACP) family. Post-translationally, 4'-phosphopantetheine is transferred from CoA to a specific serine of apo-ACP by AcpS. This modification is essential for activity because fatty acids are bound in thioester linkage to the sulfhydryl of the prosthetic group.

The protein resides in the cytoplasm. The protein operates within lipid metabolism; fatty acid biosynthesis. Its function is as follows. Carrier of the growing fatty acid chain in fatty acid biosynthesis. The sequence is that of Acyl carrier protein from Flavobacterium johnsoniae (strain ATCC 17061 / DSM 2064 / JCM 8514 / BCRC 14874 / CCUG 350202 / NBRC 14942 / NCIMB 11054 / UW101) (Cytophaga johnsonae).